The following is a 334-amino-acid chain: H-2 class I histocompatibility antigen, Q7 alpha chain (334 aa).

Positions 1-21 are cleaved as a signal peptide; that stretch reads MALTMLLLLVAAALTLIETRA. The tract at residues 22–111 is alpha-1; sequence GQHSLQYFHT…AQSYYNQSKG (90 aa). At 22–310 the chain is on the extracellular side; sequence GQHSLQYFHT…PPYTVSNMAT (289 aa). Asn-107 is a glycosylation site (N-linked (GlcNAc...) asparagine). The tract at residues 112–203 is alpha-2; that stretch reads GSHTLQWMYG…QLGKETLLRT (92 aa). 2 disulfides stabilise this stretch: Cys-122/Cys-185 and Cys-224/Cys-280. An alpha-3 region spans residues 204–295; it reads DPPKAHVTHH…GLPEPLTLRW (92 aa). An Ig-like C1-type domain is found at 206–294; that stretch reads PKAHVTHHPR…EGLPEPLTLR (89 aa). Asn-277 carries N-linked (GlcNAc...) asparagine glycosylation. The tract at residues 296 to 310 is connecting peptide; sequence GRWEPPPYTVSNMAT. Residues 311-332 form a helical membrane-spanning segment; the sequence is IAVVVDLGAVAIIGAVVAFVMN.

The protein belongs to the MHC class I family. In terms of assembly, heterodimer of an alpha chain and a beta chain (beta-2-microglobulin).

It is found in the membrane. In terms of biological role, involved in the presentation of foreign antigens to the immune system. This is H-2 class I histocompatibility antigen, Q7 alpha chain (H2-Q7) from Mus musculus (Mouse).